A 201-amino-acid polypeptide reads, in one-letter code: Ras-related protein Rab-1B (201 aa).

Methionine 1 bears the N-acetylmethionine mark. GTP contacts are provided by serine 17, glycine 18, valine 19, glycine 20, lysine 21, serine 22, cysteine 23, tyrosine 33, threonine 34, glutamate 35, serine 36, serine 39, and threonine 40. Serine 22 contributes to the Mg(2+) binding site. A Switch 1 motif is present at residues aspartate 30 to phenylalanine 45. Residues threonine 40 and aspartate 63 each contribute to the Mg(2+) site. Positions threonine 64 to glycine 83 are switch 2 region; required for interaction with REP1/CHM. A Switch 2 motif is present at residues alanine 65–glycine 80. The GTP site is built by glycine 66, asparagine 121, lysine 122, aspartate 124, serine 151, alanine 152, and lysine 153. The segment at methionine 173–cysteine 201 is disordered. 2 S-geranylgeranyl cysteine lipidation sites follow: cysteine 200 and cysteine 201. Cysteine 201 is modified (cysteine methyl ester).

Belongs to the small GTPase superfamily. Rab family. Interacts with MICAL1 and MICAL2. Interacts (in GTP-bound form) with MICALCL, MICAL1 and MILCAL3. Interacts with GDI1; the interaction requires the GDP-bound state. Interacts with CHM/REP1; the interaction requires the GDP-bound form and is necessary for prenylation by GGTase II. Interacts with RabGAP TBC1D20. Interacts (in GDP-bound form) with lipid phosphatase MTMR6 (via GRAM domain); the interaction regulates MTMR6 recruitment to the endoplasmic reticulum-Golgi intermediate compartment. Interacts (in GDP-bound form) with lipid phosphatase MTMR7. It depends on Mg(2+) as a cofactor. In terms of processing, prenylated; by GGTase II, only after interaction of the substrate with Rab escort protein 1 (REP1).

It is found in the cytoplasm. It localises to the membrane. The protein localises to the preautophagosomal structure membrane. The protein resides in the perinuclear region. The enzyme catalyses GTP + H2O = GDP + phosphate + H(+). Regulated by guanine nucleotide exchange factors (GEFs) which promote the exchange of bound GDP for free GTP. Regulated by GTPase activating proteins (GAPs) including TBC1D20 which increases the GTP hydrolysis activity. Inhibited by GDP dissociation inhibitors (GDIs). Its function is as follows. The small GTPases Rab are key regulators of intracellular membrane trafficking, from the formation of transport vesicles to their fusion with membranes. Rabs cycle between an inactive GDP-bound form and an active GTP-bound form that is able to recruit to membranes different set of downstream effectors directly responsible for vesicle formation, movement, tethering and fusion. Plays a role in the initial events of the autophagic vacuole development which take place at specialized regions of the endoplasmic reticulum. Regulates vesicular transport between the endoplasmic reticulum and successive Golgi compartments. Required to modulate the compacted morphology of the Golgi. Promotes the recruitment of lipid phosphatase MTMR6 to the endoplasmic reticulum-Golgi intermediate compartment. This chain is Ras-related protein Rab-1B (RAB1B), found in Sus scrofa (Pig).